We begin with the raw amino-acid sequence, 262 residues long: Acyl-[acyl-carrier-protein]--UDP-N-acetylglucosamine O-acyltransferase (262 aa).

This sequence belongs to the transferase hexapeptide repeat family. LpxA subfamily. As to quaternary structure, homotrimer.

The protein resides in the cytoplasm. The enzyme catalyses a (3R)-hydroxyacyl-[ACP] + UDP-N-acetyl-alpha-D-glucosamine = a UDP-3-O-[(3R)-3-hydroxyacyl]-N-acetyl-alpha-D-glucosamine + holo-[ACP]. It functions in the pathway glycolipid biosynthesis; lipid IV(A) biosynthesis; lipid IV(A) from (3R)-3-hydroxytetradecanoyl-[acyl-carrier-protein] and UDP-N-acetyl-alpha-D-glucosamine: step 1/6. In terms of biological role, involved in the biosynthesis of lipid A, a phosphorylated glycolipid that anchors the lipopolysaccharide to the outer membrane of the cell. This chain is Acyl-[acyl-carrier-protein]--UDP-N-acetylglucosamine O-acyltransferase, found in Salmonella schwarzengrund (strain CVM19633).